The following is a 344-amino-acid chain: Glyceraldehyde-3-phosphate dehydrogenase (344 aa).

Residues 11–12 (TI) and Gly110 each bind NAD(+). 139–141 (SCN) provides a ligand contact to D-glyceraldehyde 3-phosphate. Cys140 functions as the Nucleophile in the catalytic mechanism. Arg169 contributes to the NAD(+) binding site. Residue 195 to 196 (HG) participates in D-glyceraldehyde 3-phosphate binding. Gln302 contacts NAD(+).

This sequence belongs to the glyceraldehyde-3-phosphate dehydrogenase family. In terms of assembly, homotetramer.

The protein resides in the cytoplasm. It catalyses the reaction D-glyceraldehyde 3-phosphate + phosphate + NADP(+) = (2R)-3-phospho-glyceroyl phosphate + NADPH + H(+). The enzyme catalyses D-glyceraldehyde 3-phosphate + phosphate + NAD(+) = (2R)-3-phospho-glyceroyl phosphate + NADH + H(+). It functions in the pathway carbohydrate degradation; glycolysis; pyruvate from D-glyceraldehyde 3-phosphate: step 1/5. This chain is Glyceraldehyde-3-phosphate dehydrogenase, found in Pyrobaculum arsenaticum (strain DSM 13514 / JCM 11321 / PZ6).